Here is a 751-residue protein sequence, read N- to C-terminus: MSNESKCPFHQTAGGGTTNRDWWPDQLNLRILHQHSSKSSPDPDFDYAKAFKSLDFQALKKDLTALMTDSQDWWPADFGHYGPLFIRMAWHSAGTYRIGDGRGGAGSGQQRFAPLNSWPDNVSLDKARRLLWPIKQKYGNKISWADLIVLTGNVALESMGFKTFGFSGGRADVWEPDEDVYWGSEKVWLGGDTRYGKDQVKAQPPGQGDLVAEPAKHGEEQNRDLSAERNLENPLAAVQMGLIYVNPEGPEGNPDPVASGKDIRETFGRMAMNDEETVALIAGGHAFGKTHGAGPADNVGPEPEAAGLEMQGLGWHNTFGSGKGGDTITSGLEVTWTSTPTRWSNEYLNNLFDFEWELTKSPAGAHQWRPKDGKGAGTVPDAHDPGKRHAPSMLTSDLALRFDPIYEPIARHFKENPDQLADAFARAWYKLIHRDMGPLARYLGPEMPNEELLWQDPLPKADPSTISEQDIATLKSRILASGLSVGELVSTAWASASTFRGSDKRGGANGARLRLAPQKDWAANQGVDKVLAALEKIQGEFNSSGKKVSLADLIVLAGTAAVEKAAKDAGYSGSVGFRPGRVDASQEQTDVESFAVLEPLADGFRNFTKARYSVKAEKLLLDKAQLLTLTAPELTVLIGGLRVLGANHGGSKLGVFTDKPGTLSNDFFRNLLDMSVEWKPTSADNETFEGRDRKTGQVKWSGSRVDLVFGSHAQLRALSEVYASSDGGDKFVRDFVAAWQKVMELDRFDLK.

Positions 1–21 (MSNESKCPFHQTAGGGTTNRD) are disordered. Residues 90–244 (WHSAGTYRIG…LAAVQMGLIY (155 aa)) constitute a cross-link (tryptophyl-tyrosyl-methioninium (Trp-Tyr) (with M-270)). Residue His-91 is the Proton acceptor of the active site. A disordered region spans residues 195–227 (YGKDQVKAQPPGQGDLVAEPAKHGEEQNRDLSA). Residues 214 to 227 (PAKHGEEQNRDLSA) are compositionally biased toward basic and acidic residues. Residues 244-270 (YVNPEGPEGNPDPVASGKDIRETFGRM) constitute a cross-link (tryptophyl-tyrosyl-methioninium (Tyr-Met) (with W-90)). His-285 provides a ligand contact to heme b. A disordered region spans residues 364–385 (GAHQWRPKDGKGAGTVPDAHDP).

The protein belongs to the peroxidase family. Peroxidase/catalase subfamily. Homodimer or homotetramer. It depends on heme b as a cofactor. In terms of processing, formation of the three residue Trp-Tyr-Met cross-link is important for the catalase, but not the peroxidase activity of the enzyme.

It catalyses the reaction H2O2 + AH2 = A + 2 H2O. The catalysed reaction is 2 H2O2 = O2 + 2 H2O. Functionally, bifunctional enzyme with both catalase and broad-spectrum peroxidase activity. The polypeptide is Catalase-peroxidase (Pseudomonas putida (strain ATCC 47054 / DSM 6125 / CFBP 8728 / NCIMB 11950 / KT2440)).